A 384-amino-acid chain; its full sequence is Glucose-1-phosphate adenylyltransferase (384 aa).

Residues Tyr103, Gly168, 183–184 (EK), and Ser194 contribute to the alpha-D-glucose 1-phosphate site.

This sequence belongs to the bacterial/plant glucose-1-phosphate adenylyltransferase family. In terms of assembly, homotetramer.

It carries out the reaction alpha-D-glucose 1-phosphate + ATP + H(+) = ADP-alpha-D-glucose + diphosphate. It participates in glycan biosynthesis; glycogen biosynthesis. Involved in the biosynthesis of ADP-glucose, a building block required for the elongation reactions to produce glycogen. Catalyzes the reaction between ATP and alpha-D-glucose 1-phosphate (G1P) to produce pyrophosphate and ADP-Glc. This Fusobacterium nucleatum subsp. nucleatum (strain ATCC 25586 / DSM 15643 / BCRC 10681 / CIP 101130 / JCM 8532 / KCTC 2640 / LMG 13131 / VPI 4355) protein is Glucose-1-phosphate adenylyltransferase.